The following is a 423-amino-acid chain: MDIEKIEDLKKFVASCEENPSILLKPELSFFKDFIESFGGKIKKDKMGYEKMKSEDSTEEKSDEEEEDEEEEEEEEEDDDPEKLELIKEEAVECPPLAPIIEGELSEEQIEEICKLKEEAVDLVENKKYEEALEKYNKIISFGNPSAMIYTKRASILLNLKRPKACIRDCTEALNLNVDSANAYKIRAKAYRYLGKWEFAHADMEQGQKIDYDENLWDMQKLIQEKYKKIYEKRRYKINKEEEKQRLKREKELKKKLAAKKKAEKMYKENNKRENYDSDSSDSSYSEPDFSGDFPGGMPGGMPGMPGGMGGMGGMPGMPGGFPGMPGGMPGGMPGGMGGMPGMPGGMPGGMGGMPGMPGGMPDLNSPEMKELFNNPQFFQMMQNMMSNPDLINKYASDPKYKNIFENLKNSDLGGMMGEKPKP.

Positions 46 to 60 (KMGYEKMKSEDSTEE) are enriched in basic and acidic residues. The segment at 46–82 (KMGYEKMKSEDSTEEKSDEEEEDEEEEEEEEEDDDPE) is disordered. The segment covering 61–82 (KSDEEEEDEEEEEEEEEDDDPE) has biased composition (acidic residues). TPR repeat units follow at residues 113–146 (ICKL…GNPS), 147–180 (AMIY…NVDS), and 181–214 (ANAY…DYDE). Positions 260–301 (KKKAEKMYKENNKRENYDSDSSDSSYSEPDFSGDFPGGMPGG) are disordered. Residues 264–276 (EKMYKENNKRENY) are compositionally biased toward basic and acidic residues. Residues 292-362 (GDFPGGMPGG…GMPGMPGGMP (71 aa)) form a 19 X 3-4 AA approximate repeats region. The 63-residue stretch at 361 to 423 (MPDLNSPEMK…GGMMGEKPKP (63 aa)) folds into the STI1 domain.

It localises to the cytoplasm. Its function is as follows. May play a role in protein folding or protein-protein interactions. May act as a co-chaperone. This chain is 58 kDa phosphoprotein, found in Plasmodium berghei.